The chain runs to 225 residues: Uracil-DNA glycosylase (225 aa).

The Proton acceptor role is filled by Asp-65.

This sequence belongs to the uracil-DNA glycosylase (UDG) superfamily. UNG family.

The protein resides in the cytoplasm. The enzyme catalyses Hydrolyzes single-stranded DNA or mismatched double-stranded DNA and polynucleotides, releasing free uracil.. Excises uracil residues from the DNA which can arise as a result of misincorporation of dUMP residues by DNA polymerase or due to deamination of cytosine. The sequence is that of Uracil-DNA glycosylase from Bacillus thuringiensis (strain Al Hakam).